The chain runs to 148 residues: MKVIFLKDVKGKAKKGDVKNVPDGYARNYLLKNNLAEEATSGNMKALEAKKQKADQLEQKEKEDAINLKDKLAEIAVELEAKSGDNGRLFGSITSKQISEALQKQFGHKIDKRKIELDEPIRALGYTTVPVKLHPEVSGSIKVHVAEK.

Belongs to the bacterial ribosomal protein bL9 family.

Binds to the 23S rRNA. This chain is Large ribosomal subunit protein bL9, found in Oceanobacillus iheyensis (strain DSM 14371 / CIP 107618 / JCM 11309 / KCTC 3954 / HTE831).